The following is a 539-amino-acid chain: G protein-coupled receptor associated sorting protein 3 (539 aa).

Basic residues predominate over residues 1-10 (MTGSKNKARA). 2 disordered regions span residues 1–111 (MTGS…DSWF) and 132–170 (NSVAKCENKPSTSIQARVEEHTPRTSHKSRSGAEEEEEE). 2 stretches are compositionally biased toward basic and acidic residues: residues 66–80 (VVAETKEGARPESKA) and 88–106 (FNHKAENKYARSARKDKPS). The span at 132–146 (NSVAKCENKPSTSIQ) shows a compositional bias: polar residues.

Belongs to the GPRASP family. In terms of assembly, homodimer.

The protein resides in the cytoplasm. The protein localises to the nucleus. Its function is as follows. Survival and differentiation promoting protein that plays a role in the regulation of neurosynaptogenesis. Induces phosphatase PP2A activity which results in APP dephosphorylation and inhibits BACE1-mediated processing of APP. The chain is G protein-coupled receptor associated sorting protein 3 (Gprasp3) from Rattus norvegicus (Rat).